Here is a 91-residue protein sequence, read N- to C-terminus: Probable Fe(2+)-trafficking protein (91 aa).

This sequence belongs to the Fe(2+)-trafficking protein family. Monomer.

In terms of biological role, could be a mediator in iron transactions between iron acquisition and iron-requiring processes, such as synthesis and/or repair of Fe-S clusters in biosynthetic enzymes. In Salmonella agona (strain SL483), this protein is Probable Fe(2+)-trafficking protein.